The sequence spans 63 residues: ComG operon repressor (63 aa).

Negatively regulates the transcription of the comG operon. The protein is ComG operon repressor (comZ) of Bacillus subtilis (strain 168).